The sequence spans 157 residues: Ribosomal RNA large subunit methyltransferase H (157 aa).

Residues L73, G105, and 124–129 each bind S-adenosyl-L-methionine; that span reads LSKMTF.

This sequence belongs to the RNA methyltransferase RlmH family. As to quaternary structure, homodimer.

The protein resides in the cytoplasm. It catalyses the reaction pseudouridine(1915) in 23S rRNA + S-adenosyl-L-methionine = N(3)-methylpseudouridine(1915) in 23S rRNA + S-adenosyl-L-homocysteine + H(+). In terms of biological role, specifically methylates the pseudouridine at position 1915 (m3Psi1915) in 23S rRNA. The sequence is that of Ribosomal RNA large subunit methyltransferase H from Phocaeicola vulgatus (strain ATCC 8482 / DSM 1447 / JCM 5826 / CCUG 4940 / NBRC 14291 / NCTC 11154) (Bacteroides vulgatus).